A 112-amino-acid polypeptide reads, in one-letter code: Urease subunit gamma (112 aa).

It belongs to the urease gamma subunit family. In terms of assembly, heterotrimer of UreA (gamma), UreB (beta) and UreC (alpha) subunits. Three heterotrimers associate to form the active enzyme.

The protein localises to the cytoplasm. It catalyses the reaction urea + 2 H2O + H(+) = hydrogencarbonate + 2 NH4(+). Its pathway is nitrogen metabolism; urea degradation; CO(2) and NH(3) from urea (urease route): step 1/1. The chain is Urease subunit gamma from Gloeothece citriformis (strain PCC 7424) (Cyanothece sp. (strain PCC 7424)).